A 273-amino-acid chain; its full sequence is tRNA (guanine-N(7)-)-methyltransferase (273 aa).

The span at 1–31 shows a compositional bias: polar residues; the sequence is MSQHPDINTNVDATSLTDDQKSLDTNATSGN. The tract at residues 1 to 36 is disordered; that stretch reads MSQHPDINTNVDATSLTDDQKSLDTNATSGNEVAPD. S-adenosyl-L-methionine-binding residues include E105, E130, D157, and D179. D179 is an active-site residue. Residues K183, D215, and 252–255 each bind substrate; that span reads TKFE.

Belongs to the class I-like SAM-binding methyltransferase superfamily. TrmB family.

The catalysed reaction is guanosine(46) in tRNA + S-adenosyl-L-methionine = N(7)-methylguanosine(46) in tRNA + S-adenosyl-L-homocysteine. The protein operates within tRNA modification; N(7)-methylguanine-tRNA biosynthesis. In terms of biological role, catalyzes the formation of N(7)-methylguanine at position 46 (m7G46) in tRNA. This chain is tRNA (guanine-N(7)-)-methyltransferase, found in Psychrobacter cryohalolentis (strain ATCC BAA-1226 / DSM 17306 / VKM B-2378 / K5).